The chain runs to 65 residues: Large ribosomal subunit protein bL35 (65 aa).

Residues 28–53 form a disordered region; it reads NGSHNLEKKNRKRTRRLHQSTMLDNA. The segment covering 36–45 has biased composition (basic residues); the sequence is KNRKRTRRLH.

It belongs to the bacterial ribosomal protein bL35 family.

The chain is Large ribosomal subunit protein bL35 from Chlorobium luteolum (strain DSM 273 / BCRC 81028 / 2530) (Pelodictyon luteolum).